The following is a 352-amino-acid chain: C-X-C chemokine receptor type 4 (352 aa).

The interval 1–21 is important for chemokine binding and signaling; the sequence is MEGISIYTSDNYTEEMGSGDY. At 1–38 the chain is on the extracellular side; sequence MEGISIYTSDNYTEEMGSGDYDSIKEPCFREENAHFNR. The residue at position 7 (tyrosine 7) is a Sulfotyrosine. N-linked (GlcNAc...) asparagine glycosylation is present at asparagine 11. Position 12 is a sulfotyrosine (tyrosine 12). Serine 18 carries O-linked (Xyl...) (chondroitin sulfate) serine glycosylation. Sulfotyrosine is present on tyrosine 21. 2 disulfides stabilise this stretch: cysteine 28/cysteine 274 and cysteine 109/cysteine 186. Residues 39-63 traverse the membrane as a helical segment; sequence IFLPTIYSIIFLTGIVGNGLVILVM. Residues 64–77 are Cytoplasmic-facing; it reads GYQKKLRSMTDKYR. Residues 78–99 form a helical membrane-spanning segment; the sequence is LHLSVADLLFVITLPFWAVDAV. The segment at 94–97 is chemokine binding; the sequence is WAVD. The Extracellular segment spans residues 100–110; the sequence is ANWYFGNFLCK. The helical transmembrane segment at 111-130 threads the bilayer; the sequence is AVHVIYTVNLYSSVLILAFI. The tract at residues 113–117 is chemokine binding; the sequence is HVIYT. Residues 131 to 154 are Cytoplasmic-facing; it reads SLDRYLAIVHATNSQKPRKLLAEK. The Important for signaling motif lies at 133–135; the sequence is DRY. The interval 135–147 is involved in dimerization; when bound to chemokine; sequence YLAIVHATNSQKP. Residues 155–174 traverse the membrane as a helical segment; the sequence is VVYVGVWIPALLLTIPDFIF. The Extracellular portion of the chain corresponds to 175–195; the sequence is ASVSEADDRYICDRFYPNDLW. The interval 186–190 is chemokine binding, important for signaling; it reads CDRFY. Residues 191 to 210 form an involved in dimerization region; sequence PNDLWVVVFQFQHIMVGLIL. The chain crosses the membrane as a helical span at residues 196-216; the sequence is VVVFQFQHIMVGLILPGIDIL. The Cytoplasmic segment spans residues 217 to 241; sequence SCYCIIISKLSHSKGHQKRKALKTT. The chain crosses the membrane as a helical span at residues 242 to 261; sequence VILILAFFACWLPYYIGISI. The Extracellular portion of the chain corresponds to 262-282; the sequence is DSFILLEIIKQGCEFENTVHK. Positions 266-268 are involved in dimerization; that stretch reads LLE. A helical transmembrane segment spans residues 283–302; that stretch reads WISITEALAFFHCCLNPILY. Residues 303–352 are Cytoplasmic-facing; it reads AFLGAKFKTSAQHALTSVSRGSSLKILSKGKRGGHSSVSTESESSSFHSS. A phosphoserine mark is found at serine 319 and serine 321. Phosphoserine; by PKC and GRK6 occurs at positions 324 and 325. The segment at 329–352 is disordered; the sequence is LSKGKRGGHSSVSTESESSSFHSS. Serine 330 is modified (phosphoserine; by GRK6). A Glycyl lysine isopeptide (Lys-Gly) (interchain with G-Cter in ubiquitin) cross-link involves residue lysine 331. Over residues 337–352 the composition is skewed to low complexity; the sequence is HSSVSTESESSSFHSS. Serine 339 bears the Phosphoserine; by GRK6 mark. A phosphoserine mark is found at serine 348 and serine 351.

This sequence belongs to the G-protein coupled receptor 1 family. As to quaternary structure, monomer. Can form homodimers. Interacts with CD164. Interacts with ARRB2; the interaction is dependent on the C-terminal phosphorylation of CXCR4 and allows activation of MAPK1 and MAPK3. Interacts with ARR3; the interaction is dependent on the C-terminal phosphorylation of CXCR4 and modulates calcium mobilization. Interacts with RNF113A; the interaction, enhanced by CXCL12, promotes CXCR4 ubiquitination and subsequent degradation. Interacts (via the cytoplasmic C-terminal) with ITCH (via the WW domains I and II); the interaction, enhanced by CXCL12, promotes CXCR4 ubiquitination and leads to its degradation. Interacts with extracellular ubiquitin. Interacts with DBN1; this interaction is enhanced by antigenic stimulation. Following LPS binding, may form a complex with GDF5, HSP90AA1 and HSPA8. Phosphorylated on agonist stimulation. Rapidly phosphorylated on serine and threonine residues in the C-terminal. Phosphorylation at Ser-324 and Ser-325 leads to recruitment of ITCH, ubiquitination and protein degradation. Post-translationally, ubiquitinated after ligand binding, leading to its degradation. Ubiquitinated by ITCH at the cell membrane on agonist stimulation. The ubiquitin-dependent mechanism, endosomal sorting complex required for transport (ESCRT), then targets CXCR4 for lysosomal degradation. This process is dependent also on prior Ser-/Thr-phosphorylation in the C-terminal of CXCR4. Also binding of ARRB1 to STAM negatively regulates CXCR4 sorting to lysosomes though modulating ubiquitination of SFR5S. In terms of processing, sulfation is required for efficient binding of CXCL12/SDF-1alpha and promotes its dimerization. O- and N-glycosylated. N-glycosylation can mask coreceptor function. The O-glycosylation chondroitin sulfate attachment does not affect interaction with CXCL12/SDF-1alpha nor its coreceptor activity.

The protein localises to the cell membrane. It is found in the cell junction. The protein resides in the early endosome. It localises to the late endosome. Its subcellular location is the lysosome. In terms of biological role, receptor for the C-X-C chemokine CXCL12/SDF-1 that transduces a signal by increasing intracellular calcium ion levels and enhancing MAPK1/MAPK3 activation. Involved in the AKT signaling cascade. Plays a role in regulation of cell migration, e.g. during wound healing. Acts as a receptor for extracellular ubiquitin; leading to enhanced intracellular calcium ions and reduced cellular cAMP levels. Binds bacterial lipopolysaccharide (LPS) et mediates LPS-induced inflammatory response, including TNF secretion by monocytes. Involved in hematopoiesis and in cardiac ventricular septum formation. Also plays an essential role in vascularization of the gastrointestinal tract, probably by regulating vascular branching and/or remodeling processes in endothelial cells. Involved in cerebellar development. In the CNS, could mediate hippocampal-neuron survival. This chain is C-X-C chemokine receptor type 4 (CXCR4), found in Macaca mulatta (Rhesus macaque).